Consider the following 946-residue polypeptide: Bifunctional lysine-specific demethylase and histidyl-hydroxylase NO66 (946 aa).

The disordered stretch occupies residues Tyr-14–Val-435. 2 stretches are compositionally biased toward polar residues: residues Ser-17 to Thr-28 and Ala-37 to Ser-46. Positions Ser-59–Ser-73 are enriched in low complexity. The segment covering Thr-99 to Glu-110 has biased composition (polar residues). Over residues Glu-117–Gly-128 the composition is skewed to basic and acidic residues. The segment covering Thr-169–Arg-186 has biased composition (polar residues). A compositionally biased stretch (basic and acidic residues) spans Glu-187–Gly-198. Polar residues predominate over residues Thr-239 to Arg-256. Residues Glu-257–Gly-268 show a composition bias toward basic and acidic residues. Thr-309 carries the post-translational modification Phosphothreonine. A compositionally biased stretch (polar residues) spans Thr-309–Glu-327. Over residues Ser-328–Gly-338 the composition is skewed to basic and acidic residues. Phosphoserine is present on Ser-339. Residues Thr-379–Glu-397 are compositionally biased toward polar residues. Positions Ser-398–Gly-408 are enriched in basic and acidic residues. Polar residues predominate over residues Arg-416–Asn-433. A JmjC domain is found at Asn-606–Val-742. Fe cation is bound by residues His-646, Asp-648, and His-708.

It belongs to the ROX family. NO66 subfamily. It depends on Fe(2+) as a cofactor.

The protein resides in the nucleus. The catalysed reaction is N(6),N(6)-dimethyl-L-lysyl(36)-[histone H3] + 2 2-oxoglutarate + 2 O2 = L-lysyl(36)-[histone H3] + 2 formaldehyde + 2 succinate + 2 CO2. Functionally, oxygenase that can act as both a histone lysine demethylase and a ribosomal histidine hydroxylase. Specifically demethylates 'Lys-4' (H3K4me) and 'Lys-36' (H3K36me) of histone H3, thereby playing a central role in histone code. This Drosophila pseudoobscura pseudoobscura (Fruit fly) protein is Bifunctional lysine-specific demethylase and histidyl-hydroxylase NO66.